Here is a 764-residue protein sequence, read N- to C-terminus: 5-methyltetrahydropteroyltriglutamate--homocysteine methyltransferase (764 aa).

Residues 16–19 and Lys121 each bind 5-methyltetrahydropteroyltri-L-glutamate; that span reads RELK. L-homocysteine contacts are provided by residues 440-442 and Glu493; that span reads IGS. L-methionine-binding positions include 440 to 442 and Glu493; that span reads IGS. Residues 524 to 525 and Trp570 contribute to the 5-methyltetrahydropteroyltri-L-glutamate site; that span reads RC. Asp608 provides a ligand contact to L-homocysteine. Residue Asp608 participates in L-methionine binding. 5-methyltetrahydropteroyltri-L-glutamate is bound at residue Glu614. Residues His650, Cys652, and Glu674 each coordinate Zn(2+). Catalysis depends on His703, which acts as the Proton donor. Position 735 (Cys735) interacts with Zn(2+).

The protein belongs to the vitamin-B12 independent methionine synthase family. Zn(2+) serves as cofactor.

The catalysed reaction is 5-methyltetrahydropteroyltri-L-glutamate + L-homocysteine = tetrahydropteroyltri-L-glutamate + L-methionine. It functions in the pathway amino-acid biosynthesis; L-methionine biosynthesis via de novo pathway; L-methionine from L-homocysteine (MetE route): step 1/1. In terms of biological role, catalyzes the transfer of a methyl group from 5-methyltetrahydrofolate to homocysteine resulting in methionine formation. The polypeptide is 5-methyltetrahydropteroyltriglutamate--homocysteine methyltransferase (Burkholderia orbicola (strain MC0-3)).